A 177-amino-acid chain; its full sequence is Isopentenyl-diphosphate Delta-isomerase (177 aa).

Mn(2+) contacts are provided by histidine 22 and histidine 28. A Nudix hydrolase domain is found at 26–160 (LRHMAISVFV…PERFTPWLRI (135 aa)). Cysteine 62 is an active-site residue. Histidine 64 contributes to the Mn(2+) binding site. Glutamate 82 serves as a coordination point for Mg(2+). Positions 108 and 110 each coordinate Mn(2+). Residue glutamate 110 is part of the active site.

The protein belongs to the IPP isomerase type 1 family. Mg(2+) is required as a cofactor. The cofactor is Mn(2+).

Its subcellular location is the cytoplasm. It carries out the reaction isopentenyl diphosphate = dimethylallyl diphosphate. It functions in the pathway isoprenoid biosynthesis; dimethylallyl diphosphate biosynthesis; dimethylallyl diphosphate from isopentenyl diphosphate: step 1/1. Its pathway is porphyrin-containing compound metabolism; chlorophyll biosynthesis. Its function is as follows. Catalyzes the 1,3-allylic rearrangement of the homoallylic substrate isopentenyl (IPP) to its highly electrophilic allylic isomer, dimethylallyl diphosphate (DMAPP). This is Isopentenyl-diphosphate Delta-isomerase from Cereibacter sphaeroides (strain KD131 / KCTC 12085) (Rhodobacter sphaeroides).